Reading from the N-terminus, the 95-residue chain is Citrate lyase acyl carrier protein (95 aa).

Position 14 is an O-(phosphoribosyl dephospho-coenzyme A)serine (S14).

Belongs to the CitD family. Oligomer with a subunit composition of (alpha,beta,gamma)6.

It is found in the cytoplasm. Its function is as follows. Covalent carrier of the coenzyme of citrate lyase. The protein is Citrate lyase acyl carrier protein of Haemophilus influenzae (strain PittGG).